A 387-amino-acid chain; its full sequence is Migration and invasion-inhibitory protein (387 aa).

Over residues 50-59 the composition is skewed to polar residues; sequence NLEMPLSQET. Disordered regions lie at residues 50-80 and 133-172; these read NLEM…DPLD and VSLG…SAVP. A compositionally biased stretch (low complexity) spans 60-69; the sequence is SSASSVAPSS. Residues 70–80 are compositionally biased toward basic and acidic residues; sequence QDKRHMLDPLD. Ser-307 carries the phosphoserine modification.

In terms of assembly, interacts with IGFBP2.

Inhibits glioma cells invasion and down-regulates adhesion- and motility-associated genes such as NFKB2 and ICAM1. Exhibits opposing effects to IGFBP2 on cell invasion. This chain is Migration and invasion-inhibitory protein (Miip), found in Mus musculus (Mouse).